The following is a 458-amino-acid chain: Argininosuccinate lyase (458 aa).

It belongs to the lyase 1 family. Argininosuccinate lyase subfamily.

It is found in the cytoplasm. It catalyses the reaction 2-(N(omega)-L-arginino)succinate = fumarate + L-arginine. It participates in amino-acid biosynthesis; L-arginine biosynthesis; L-arginine from L-ornithine and carbamoyl phosphate: step 3/3. The protein is Argininosuccinate lyase of Pseudoalteromonas atlantica (strain T6c / ATCC BAA-1087).